We begin with the raw amino-acid sequence, 468 residues long: Trigger factor (468 aa).

The 82-residue stretch at 162–243 (GDVLTLDLQA…VSQVAARELP (82 aa)) folds into the PPIase FKBP-type domain. The segment at 428-468 (NGEIVDLDDEEDEETEAAEADATEAADAEKADDKAEEKTEG) is disordered. The span at 432–453 (VDLDDEEDEETEAAEADATEAA) shows a compositional bias: acidic residues. Basic and acidic residues predominate over residues 454-468 (DAEKADDKAEEKTEG).

Belongs to the FKBP-type PPIase family. Tig subfamily.

It is found in the cytoplasm. It carries out the reaction [protein]-peptidylproline (omega=180) = [protein]-peptidylproline (omega=0). Its function is as follows. Involved in protein export. Acts as a chaperone by maintaining the newly synthesized protein in an open conformation. Functions as a peptidyl-prolyl cis-trans isomerase. The polypeptide is Trigger factor (Streptomyces coelicolor (strain ATCC BAA-471 / A3(2) / M145)).